The chain runs to 303 residues: Ferrochelatase (303 aa).

Positions 185 and 262 each coordinate Fe cation.

It belongs to the ferrochelatase family.

Its subcellular location is the cytoplasm. The enzyme catalyses heme b + 2 H(+) = protoporphyrin IX + Fe(2+). Its pathway is porphyrin-containing compound metabolism; protoheme biosynthesis; protoheme from protoporphyrin-IX: step 1/1. In terms of biological role, catalyzes the ferrous insertion into protoporphyrin IX. The chain is Ferrochelatase from Campylobacter jejuni subsp. jejuni serotype O:2 (strain ATCC 700819 / NCTC 11168).